A 387-amino-acid polypeptide reads, in one-letter code: MKILADENMPYVQELFGDLGTIETVNGRELTPEQVKDADVLLVRSVTQVNGSLLSLNNKLKFVGSATIGTDHIDTDYLASRDIPFSNAPGCNATAVGEFAFIAMLELANRFGGKLKDKTVGIVGAGNTGSAVAKCLQAYGVTVLLHDPVIQDSDPRDFISLDELIARCDVISLHVPIIKTGEHKTWYLFDETRLNSLKPGTWLLNCCRGEVIDNRALIKVKQQRPDIKLVLDVWEGEPNPMHELIPLVELATPHIAGYSLEGKARGTYMLYQKLMQVLGRDADKSMTTLLPSLWSVQLDIESIPNEKSLLKLARFIYDLRDDDELFRKTILDDSSKNDQVNCVNNNGFDLMRKNHQHRREFRALRLVNTGHSDVNWLTNLGFSGVGQ.

Residues S45 and T67 each contribute to the substrate site. An NAD(+)-binding site is contributed by D147. R208 is an active-site residue. D232 is an NAD(+) binding site. E237 is a catalytic residue. The active-site Proton donor is the H254. G257 contacts NAD(+). Residue Y258 coordinates substrate.

This sequence belongs to the D-isomer specific 2-hydroxyacid dehydrogenase family. PdxB subfamily. Homodimer.

It localises to the cytoplasm. The catalysed reaction is 4-phospho-D-erythronate + NAD(+) = (R)-3-hydroxy-2-oxo-4-phosphooxybutanoate + NADH + H(+). It participates in cofactor biosynthesis; pyridoxine 5'-phosphate biosynthesis; pyridoxine 5'-phosphate from D-erythrose 4-phosphate: step 2/5. Catalyzes the oxidation of erythronate-4-phosphate to 3-hydroxy-2-oxo-4-phosphonooxybutanoate. This is Erythronate-4-phosphate dehydrogenase from Shewanella violacea (strain JCM 10179 / CIP 106290 / LMG 19151 / DSS12).